The sequence spans 466 residues: Nuclear pore complex protein Nup50 (466 aa).

The span at 1 to 14 (MAKRVAEKELTDRN) shows a compositional bias: basic and acidic residues. Positions 1–22 (MAKRVAEKELTDRNWDEEDEVE) are disordered. Lysine 8 bears the N6-acetyllysine mark. Residue serine 52 is modified to Phosphoserine. Copy 1 of the repeat occupies 76 to 77 (FG). The 5 X 2 AA repeats of F-G stretch occupies residues 76 to 302 (FGGSGGKPLE…FSAGSSSLFG (227 aa)). Lysine 82 is subject to N6-acetyllysine. Residues 112–113 (FG) form repeat 2. Lysine 126 is subject to N6-acetyllysine. Disordered regions lie at residues 128 to 150 (ISSP…STAC) and 200 to 257 (LENG…AEKK). The span at 131–150 (PKCNNSNQPPSSGPASSTAC) shows a compositional bias: polar residues. Positions 143-205 (GPASSTACPG…IEKQLENGGG (63 aa)) are binding to CDKN1B. Phosphoserine is present on serine 208. The stretch at 225–226 (FG) is repeat 3. Residues 225–235 (FGSTKLQQESP) are compositionally biased toward polar residues. Phosphoserine is present on serine 234. Positions 241-257 (NKAEDTSEKVEFTAEKK) are enriched in basic and acidic residues. Threonine 246 carries the phosphothreonine modification. Residue serine 268 is modified to Phosphoserine. Residues 271–272 (FG) form repeat 4. Position 294 is a phosphoserine (serine 294). Residues 301–302 (FG) form repeat 5. The interval 316 to 343 (SAKASESPAGGGSSECRDGEEEENDEPP) is disordered. The RanBD1 domain occupies 333–466 (DGEEEENDEP…HKILLEKKDA (134 aa)). Lysine 351 participates in a covalent cross-link: Glycyl lysine isopeptide (Lys-Gly) (interchain with G-Cter in SUMO2). Lysine 448 carries the N6-acetyllysine modification.

As to quaternary structure, does not interact with TPR. Interacts with Importin alpha-2, Importin beta, Importin beta-2, NUP153, Ran binding protein 7, CDKN1B and itself. In terms of tissue distribution, widely expressed at low levels. Highest in the developing neural tube and adult testes.

It localises to the nucleus. The protein resides in the nuclear pore complex. The protein localises to the nucleus membrane. Component of the nuclear pore complex that has a direct role in nuclear protein import. Actively displaces NLSs from importin-alpha, and facilitates disassembly of the importin-alpha:beta-cargo complex and importin recycling. Interacts with regulatory proteins of cell cycle progression including CDKN1B. This interaction is required for correct intracellular transport and degradation of CDKN1B. The polypeptide is Nuclear pore complex protein Nup50 (Nup50) (Mus musculus (Mouse)).